Reading from the N-terminus, the 65-residue chain is SCOCO-like protein 1 (65 aa).

A coiled-coil region spans residues 8 to 44; that stretch reads RSLMEQKAMELQQQLQALLDEIDQNKQESENISRESE.

The protein belongs to the SLO1 family.

The protein is SCOCO-like protein 1 of Schizosaccharomyces pombe (strain 972 / ATCC 24843) (Fission yeast).